The primary structure comprises 289 residues: Rhomboid-type serine protease 2 (289 aa).

A run of 6 helical transmembrane segments spans residues 26-46, 67-87, 100-120, 122-142, 157-179, and 184-203; these read VVII…VDIQ, FPFI…LTPL, CLAL…IGLE, FVFG…LLLG, IGTY…AVLV, and FWGH…SSTL. S134 acts as the Nucleophile in catalysis. H187 is a catalytic residue.

The protein belongs to the peptidase S54 family.

The protein resides in the golgi apparatus membrane. It localises to the golgi apparatus. The protein localises to the cis-Golgi network membrane. It carries out the reaction Cleaves type-1 transmembrane domains using a catalytic dyad composed of serine and histidine that are contributed by different transmembrane domains.. Its function is as follows. Probable rhomboid-type serine protease that catalyzes intramembrane proteolysis. The sequence is that of Rhomboid-type serine protease 2 (RBD2) from Podospora anserina (Pleurage anserina).